Reading from the N-terminus, the 387-residue chain is S-adenosylmethionine synthase (387 aa).

Mg(2+) is bound at residue Glu8. Residue His14 participates in ATP binding. Glu42 is a binding site for K(+). Residues Glu55 and Gln98 each contribute to the L-methionine site. ATP-binding positions include Asp166–Lys168, Ser234–Phe237, Asp245, Arg251–Lys252, Ala268, Lys272, and Lys276. Asp245 contacts L-methionine. Position 276 (Lys276) interacts with L-methionine.

This sequence belongs to the AdoMet synthase family. In terms of assembly, homotetramer. Mn(2+) serves as cofactor. Mg(2+) is required as a cofactor. The cofactor is Co(2+). It depends on K(+) as a cofactor.

It is found in the cytoplasm. The enzyme catalyses L-methionine + ATP + H2O = S-adenosyl-L-methionine + phosphate + diphosphate. It participates in amino-acid biosynthesis; S-adenosyl-L-methionine biosynthesis; S-adenosyl-L-methionine from L-methionine: step 1/1. Catalyzes the formation of S-adenosylmethionine from methionine and ATP. The reaction comprises two steps that are both catalyzed by the same enzyme: formation of S-adenosylmethionine (AdoMet) and triphosphate, and subsequent hydrolysis of the triphosphate. The protein is S-adenosylmethionine synthase (METK-1) of Ostreococcus lucimarinus (strain CCE9901).